We begin with the raw amino-acid sequence, 259 residues long: Deoxyribose-phosphate aldolase (259 aa).

Residue Asp102 is the Proton donor/acceptor of the active site. Catalysis depends on Lys167, which acts as the Schiff-base intermediate with acetaldehyde. Residue Lys201 is the Proton donor/acceptor of the active site.

It belongs to the DeoC/FbaB aldolase family. DeoC type 2 subfamily.

The protein resides in the cytoplasm. The catalysed reaction is 2-deoxy-D-ribose 5-phosphate = D-glyceraldehyde 3-phosphate + acetaldehyde. It participates in carbohydrate degradation; 2-deoxy-D-ribose 1-phosphate degradation; D-glyceraldehyde 3-phosphate and acetaldehyde from 2-deoxy-alpha-D-ribose 1-phosphate: step 2/2. Functionally, catalyzes a reversible aldol reaction between acetaldehyde and D-glyceraldehyde 3-phosphate to generate 2-deoxy-D-ribose 5-phosphate. This is Deoxyribose-phosphate aldolase from Shigella flexneri.